The following is a 75-amino-acid chain: Pi-hexatoxin-Hi1d (75 aa).

6 disulfide bridges follow: Cys-3–Cys-18, Cys-10–Cys-23, Cys-17–Cys-33, Cys-40–Cys-55, Cys-47–Cys-60, and Cys-54–Cys-71. Domain repeat units follow at residues 3–33 and 40–71; these read CIRKWLSCVDRKNDCCEGLECYKRRHSFEVC and CLVKWKQCDGRERDCCAGLECWKRSGNKSSVC. Positions 3–71 are 2 X approximate repeats with cysteine pattern C-C-CC-C-C; that stretch reads CIRKWLSCVD…KRSGNKSSVC (69 aa).

This sequence belongs to the psalmotoxin-1 family. Double-knot toxin subfamily. In terms of tissue distribution, expressed by the venom gland.

The protein localises to the secreted. Its function is as follows. This toxin potently and selectively inhibits ASIC1a, an isoform of the gene ASIC1. It incompletely inhibits ASIC1a activation in a pH-independent and slowly reversible manner. This toxin acts by binding to and stabilizing the closed state of the channel, thereby impeding the transition into a conducting state. This toxin may bind to the acidic pocket of ASIC1a, since mutation of a key residue of this pocket (Arg-350) abolishes the ability of the toxin to inhibit ASIC1a. In vivo, this toxin protects the brain from neuronal injury when administered up to 8 hours after stroke onset. This is Pi-hexatoxin-Hi1d from Hadronyche infensa (Fraser island funnel-web spider).